The following is a 319-amino-acid chain: MKTFGKKVVLIGDGSVGSSYAFAMVTQGVADEFVIIDIAKDKVKADVQDLNHGTVHSPSPVDVKAGEYEDCKDADLVVITAGAPQKPGETRLQLVEKNTKIMKSIVKSVMDSGFDGYFLIAANPVDILTRFVKEYTGLPAERVIGSGTVLDSARLQYLISQELGVAPSSVDASIIGEHGDTELAVWSQANVAGISVYDTLKEQTGSEAKAEEIYVNTRDAAYEIIQAKGSTYYGIALALMRISKAILNNENNVLNVSIQLDGQYGGHKGVYLGVPTLVNQHGAVKIYEMPLSAEEQALFDKSVKTLEDTFDSIKYLLED.

Residues Val16, Asp37, Lys42, Tyr68, and 82–83 (GA) each bind NAD(+). Substrate contacts are provided by Gln85 and Arg91. NAD(+)-binding positions include Ser104, 121 to 123 (AAN), and Ser146. 123–126 (NPVD) contributes to the substrate binding site. Position 151 to 154 (151 to 154 (DSAR)) interacts with substrate. His178 acts as the Proton acceptor in catalysis. Tyr222 carries the phosphotyrosine modification. Thr231 is a substrate binding site.

This sequence belongs to the LDH/MDH superfamily. LDH family. As to quaternary structure, homotetramer.

It localises to the cytoplasm. It catalyses the reaction (S)-lactate + NAD(+) = pyruvate + NADH + H(+). Its pathway is fermentation; pyruvate fermentation to lactate; (S)-lactate from pyruvate: step 1/1. Catalyzes the conversion of lactate to pyruvate (Potential). Contributes to S.aureus growth during nitrosative stress in both aerobically and anaerobically cultured cells, despite playing a secondary role in this resistance mechanism. The polypeptide is L-lactate dehydrogenase 2 (Staphylococcus aureus (strain USA300)).